Reading from the N-terminus, the 453-residue chain is Dibenzothiophene-sulfone monooxygenase (453 aa).

FMN is bound by residues D59, T106, H156, Y160, and S231.

This sequence belongs to the NtaA/SnaA/DszA monooxygenase family. As to quaternary structure, homodimer.

It is found in the cytoplasm. The catalysed reaction is dibenzothiophene 5,5-dioxide + FMNH2 + NADH + O2 = 2'-hydroxybiphenyl-2-sulfinate + FMN + NAD(+) + H2O + H(+). Its pathway is sulfur metabolism; dibenzothiophene degradation. Functionally, catalyzes the second step of the '4S' desulfurization pathway that removes covalently bound sulfur from dibenzothiophene (DBT) without breaking carbon-carbon bonds. Metabolizes DBT-sulfone (DBTO2 or DBT 5,5-dioxide) to 2-(2'-hydroxyphenyl)benzene sulphinate (HBPS). In Rhodococcus erythropolis (strain XP), this protein is Dibenzothiophene-sulfone monooxygenase.